We begin with the raw amino-acid sequence, 256 residues long: Undecaprenyl-diphosphatase (256 aa).

A run of 7 helical transmembrane segments spans residues 1–21 (MDIF…FLPV), 41–61 (FHKT…LALF), 69–89 (VDIW…GFLL), 96–116 (LFAP…FLVL), 172–192 (VAAE…TGYD), 207–227 (ALGV…KGFL), and 233–253 (FNFV…LFYL).

The protein belongs to the UppP family.

Its subcellular location is the cell inner membrane. The enzyme catalyses di-trans,octa-cis-undecaprenyl diphosphate + H2O = di-trans,octa-cis-undecaprenyl phosphate + phosphate + H(+). Catalyzes the dephosphorylation of undecaprenyl diphosphate (UPP). Confers resistance to bacitracin. This chain is Undecaprenyl-diphosphatase, found in Wolinella succinogenes (strain ATCC 29543 / DSM 1740 / CCUG 13145 / JCM 31913 / LMG 7466 / NCTC 11488 / FDC 602W) (Vibrio succinogenes).